A 518-amino-acid chain; its full sequence is Protein FAM98A (518 aa).

Disordered stretches follow at residues Gly300–Ser415 and Gly434–Ser518. A compositionally biased stretch (basic and acidic residues) spans Val302 to Glu311. Gly residues-rich tracts occupy residues Gly349–Gly364, Trp383–Asp396, and Gln405–Ser415. A compositionally biased stretch (basic and acidic residues) spans Arg447–Gly459. The span at Gly460–Gly484 shows a compositional bias: gly residues. Positions Tyr488–Gln504 are enriched in low complexity. A compositionally biased stretch (polar residues) spans Tyr505 to Ser518.

The protein belongs to the FAM98 family. Interacts (via N- and C-terminus) with DDX1. Interacts (via N- and C-terminus) with C14orf166. Interacts with FAM98B. Interacts with PLEKHM1 (via N- and C-terminus).

Its function is as follows. Positively stimulates PRMT1-induced protein arginine methylation. Involved in skeletal homeostasis. Positively regulates lysosome peripheral distribution and ruffled border formation in osteoclasts. This is Protein FAM98A from Pongo abelii (Sumatran orangutan).